The sequence spans 469 residues: DNA polymerase delta subunit 2 (469 aa).

Position 1 is an N-acetylmethionine (methionine 1). At serine 257 the chain carries Phosphoserine.

It belongs to the DNA polymerase delta/II small subunit family. In terms of assembly, component of both the DNA polymerase delta and DNA polymerase zeta complexes. Component of the tetrameric DNA polymerase delta complex (Pol-delta4), which consists of POLD1/p125, POLD2/p50, POLD3/p66/p68 and POLD4/p12, with POLD1 bearing DNA polymerase and 3' to 5' proofreading exonuclease activities. Within Pol-delta4, directly interacts with POLD1, POLD3 and POLD4. Following stress caused by DNA damaging agents or by replication stress, POLD4 is degraded and Pol-delta4 is converted into a trimeric form of the complex (Pol-delta3), which consists of POLD1, POLD2 and POLD3. Pol-delta3 is the major form occurring at S phase replication sites, as well as DNA damage sites. Also observed as a dimeric complex with POLD2 (Pol-delta2 complex). Pol-delta2 is relatively insensitive to the PCNA stimulation (2-5-fold) compared to Pol-delta4 that is stimulated by over 50-fold. Contrary to the other components of Pol-delta4, does not directly interact with PCNA. As POLD1 and POLD4, directly interacts with WRNIP1; this interaction stimulates DNA polymerase delta-mediated DNA synthesis, independently of the presence of PCNA. This stimulation may be due predominantly to an increase of initiation frequency and also to increased processivity. Directly interacts with POLDIP2 and POLDIP3. Directly interacts with KCTD13/PDIP1; in the presence of PCNA, this interaction may stimulate DNA polymerase activity. Component of the tetrameric Pol-zeta complex (Pol-zeta4), which consists of REV3L, MAD2L2, POLD2 and POLD3, with REV3L bearing DNA polymerase catalytic activity. Interacts with KCTD10.

Its subcellular location is the nucleus. In terms of biological role, accessory component of both the DNA polymerase delta complex and the DNA polymerase zeta complex. As a component of the trimeric and tetrameric DNA polymerase delta complexes (Pol-delta3 and Pol-delta4, respectively), plays a role in high fidelity genome replication, including in lagging strand synthesis, and repair. Pol-delta3 and Pol-delta4 are characterized by the absence or the presence of POLD4. They exhibit differences in catalytic activity. Most notably, Pol-delta3 shows higher proofreading activity than Pol-delta4. Although both Pol-delta3 and Pol-delta4 process Okazaki fragments in vitro, Pol-delta3 may also be better suited to fulfill this task, exhibiting near-absence of strand displacement activity compared to Pol-delta4 and stalling on encounter with the 5'-blocking oligonucleotides. Pol-delta3 idling process may avoid the formation of a gap, while maintaining a nick that can be readily ligated. Along with DNA polymerase kappa, DNA polymerase delta carries out approximately half of nucleotide excision repair (NER) synthesis following UV irradiation. Under conditions of DNA replication stress, required for the repair of broken replication forks through break-induced replication (BIR). Involved in the translesion synthesis (TLS) of templates carrying O6-methylguanine or abasic sites performed by Pol-delta4, independently of DNA polymerase zeta (REV3L) or eta (POLH). Facilitates abasic site bypass by DNA polymerase delta by promoting extension from the nucleotide inserted opposite the lesion. Also involved in TLS as a component of the DNA polymerase zeta complex. Along with POLD3, dramatically increases the efficiency and processivity of DNA synthesis of the DNA polymerase zeta complex compared to the minimal zeta complex, consisting of only REV3L and REV7. This chain is DNA polymerase delta subunit 2 (Pold2), found in Mus musculus (Mouse).